Here is a 481-residue protein sequence, read N- to C-terminus: Vanillin dehydrogenase (481 aa).

NAD(+) is bound at residue 228–233 (GSTHVG). Active-site residues include glutamate 250 and cysteine 284.

This sequence belongs to the aldehyde dehydrogenase family.

It catalyses the reaction vanillin + NAD(+) + H2O = vanillate + NADH + 2 H(+). Its function is as follows. Catalyzes the NAD-dependent oxidation of vanillin to vanillic acid. This is Vanillin dehydrogenase (vdh) from Pseudomonas sp. (strain HR199 / DSM 7063).